A 908-amino-acid polypeptide reads, in one-letter code: NADH-quinone oxidoreductase subunit G (908 aa).

The 2Fe-2S ferredoxin-type domain occupies 2 to 83 (ATIHVDGKEY…GTFISIDDEE (82 aa)). [2Fe-2S] cluster-binding residues include Cys-34, Cys-45, Cys-48, and Cys-67. Residues 83–122 (EAKQFRESVVEWLMTNHPHDCPVCEEGGNCHLQDMTVMTG) enclose the 4Fe-4S His(Cys)3-ligated-type domain. His-99, Cys-103, Cys-106, Cys-112, Cys-151, Cys-154, Cys-157, Cys-201, Cys-228, Cys-231, Cys-235, and Cys-263 together coordinate [4Fe-4S] cluster. Residues 221 to 277 (MQFAPSICQQCSIGCNISPGERYGELRRIENRYNGTVNHYFLCDRGRFGYGYVNLKD) enclose the 4Fe-4S Mo/W bis-MGD-type domain.

This sequence belongs to the complex I 75 kDa subunit family. In terms of assembly, composed of 13 different subunits. Subunits NuoCD, E, F, and G constitute the peripheral sector of the complex. [2Fe-2S] cluster is required as a cofactor. Requires [4Fe-4S] cluster as cofactor.

The protein localises to the cytoplasm. It is found in the cell inner membrane. The enzyme catalyses a quinone + NADH + 5 H(+)(in) = a quinol + NAD(+) + 4 H(+)(out). In terms of biological role, NDH-1 shuttles electrons from NADH, via FMN and iron-sulfur (Fe-S) centers, to quinones in the respiratory chain. The immediate electron acceptor for the enzyme in this species is believed to be ubiquinone. Couples the redox reaction to proton translocation (for every two electrons transferred, four hydrogen ions are translocated across the cytoplasmic membrane), and thus conserves the redox energy in a proton gradient. This chain is NADH-quinone oxidoreductase subunit G (nuoG), found in Escherichia coli (strain K12).